Here is a 229-residue protein sequence, read N- to C-terminus: Growth factor receptor-bound protein 2-A (229 aa).

The region spanning Met-1–His-58 is the SH3 1 domain. An SH2 domain is found at Trp-60–Glu-152. An SH3 2 domain is found at Gln-168–Arg-227.

Belongs to the GRB2/sem-5/DRK family.

It localises to the nucleus. The protein resides in the cytoplasm. The protein localises to the endosome. It is found in the golgi apparatus. Its function is as follows. Adapter protein that provides a critical link between cell surface growth factor receptors and the Ras signaling pathway. Promotes meiotic reinitiation during oocyte maturation. The sequence is that of Growth factor receptor-bound protein 2-A (grb2-a) from Xenopus laevis (African clawed frog).